The chain runs to 500 residues: Neuronal pentraxin receptor (500 aa).

The Cytoplasmic portion of the chain corresponds to 1–2; the sequence is MK. The helical; Signal-anchor for type II membrane protein transmembrane segment at 3-23 threads the bilayer; the sequence is FLAVLLAAGMLAFLGAVICII. At 24–500 the chain is on the extracellular side; it reads ASVPLAASPA…FDVCKGRAKA (477 aa). Asparagine 42 is a glycosylation site (N-linked (GlcNAc...) asparagine). Positions 42 to 63 are enriched in low complexity; the sequence is NASVASGAAASPGPQRSLSALH. Disordered regions lie at residues 42–81 and 162–183; these read NASVASGAAASPGPQRSLSALHGAGGSAGPPALPGAPAAS and ESGLPRGLQGAGPRRDTMADGP. An N-linked (GlcNAc...) asparagine glycan is attached at asparagine 216. The 203-residue stretch at 292–494 folds into the Pentraxin (PTX) domain; that stretch reads DAFKISIPIR…GATKAAFDVC (203 aa). An intrachain disulfide couples cysteine 322 to cysteine 383. Residues asparagine 347, glutamate 425, glutamine 426, aspartate 427, and glutamine 437 each contribute to the Ca(2+) site. N-linked (GlcNAc...) asparagine glycosylation occurs at asparagine 463.

Heteropentamer with NPTX1 and/or NPTX2. Also binds taipoxin-associated calcium-binding protein 49 (TCBP49/RCN2). Interacts with KLHL2. Ca(2+) serves as cofactor. In terms of processing, ubiquitinated by a cullin-RING-based BCR (BTB-CUL3-RBX1) E3 ubiquitin-protein ligase complex containing KLHL2.

The protein localises to the membrane. May be involved in mediating uptake of synaptic material during synapse remodeling or in mediating the synaptic clustering of AMPA glutamate receptors at a subset of excitatory synapses. In Homo sapiens (Human), this protein is Neuronal pentraxin receptor (NPTXR).